A 280-amino-acid chain; its full sequence is MSESFDCAKCNESLYGRKYIQTDSGPYCVPCYDNTFANTCAECQQLIGHDSRELFYEDRHFHEGCFRCCRCQRSLADEPFTCQDSELLCNDCYCSAFSSQCSACGETVMPGSRKLEYGGQTWHEHCFLCSGCEQPLGSRSFVPDKGAHYCVPCYENKFAPRCARCSKTLTQGGVTYRDQPWHRECLVCTGCQTPLAGQQFTSRDEDPYCVACFGELFAPKCSSCKRPIVGLGGGKYVSFEDRHWHHNCFSCARCSTSLVGQGFVPDGDQVLCQGCSQAGP.

An N-acetylserine modification is found at S2. The C4-type zinc-finger motif lies at 7–31 (CAKCNESLYGRKYIQTDSGPYCVPC). LIM zinc-binding domains lie at 40 to 92 (CAEC…CNDC) and 101 to 153 (CSAC…CVPC). At K157 the chain carries N6-acetyllysine. 2 LIM zinc-binding domains span residues 162–212 (CARC…CVAC) and 221–275 (CSSC…CQGC). Position 235 is an N6-acetyllysine (K235).

In terms of assembly, interacts with SOX15; the interaction recruits FHL3 to FOXK1 promoters where it acts as a transcriptional coactivator of FOXK1. As to expression, expressed only in skeletal muscle.

Its subcellular location is the nucleus. It localises to the cytoplasm. In terms of biological role, recruited by SOX15 to FOXK1 promoters where it acts as a transcriptional coactivator of FOXK1. The chain is Four and a half LIM domains protein 3 (FHL3) from Homo sapiens (Human).